The primary structure comprises 384 residues: MSAWVLPDHIADVLPSEARHIEELRRGLIDTARGYGYELVMPPMLEHLESLLSGTGEALDLQTFKLVDQLSGRSIGLRADMTQQVARIDAHLLNRSGVTRLCYCGPVLHTRPDRPRATREPLQFGAEIYGHSGMEADLESVLLALDCLHLAGVEGVSVDLSDARVVRTLLEPIAADSATVRRIYAALAAKDASELSQASAGLPSGTRRALSAVLELYGDASVLDEARTALSDVAGVEEVLANLKSIAAHLEGRTVSFDLADLRGYSYYSGARFTIYARNATDAVVRGGRYDEVGAAFGRTRPAAGFSLDIKQLVGIVPPRTLKAAIRAPWAATPDAHRFIAQLRSAGETVVCVLPGHESQVQEFQCDRELVLEQGQWMVRPLPY.

It belongs to the class-II aminoacyl-tRNA synthetase family. HisZ subfamily. In terms of assembly, heteromultimer composed of HisG and HisZ subunits.

The protein resides in the cytoplasm. It participates in amino-acid biosynthesis; L-histidine biosynthesis; L-histidine from 5-phospho-alpha-D-ribose 1-diphosphate: step 1/9. Required for the first step of histidine biosynthesis. May allow the feedback regulation of ATP phosphoribosyltransferase activity by histidine. In Paracidovorax citrulli (strain AAC00-1) (Acidovorax citrulli), this protein is ATP phosphoribosyltransferase regulatory subunit.